Consider the following 139-residue polypeptide: MGVISEFKAFAVKGNVVDMAVGIIIGAAFGKIVSSFVGDVVMPPIGLLIGGVDFGDLAITLKAAQGDVPAVVLAYGKFIQSVIDFVIVAFAIFMGVKAINRLKREEAVAPSLPPTPTKEEVLLGEIRDLLKAQNDKPLP.

The next 2 membrane-spanning stretches (helical) occupy residues 9–29 and 79–99; these read AFAVKGNVVDMAVGIIIGAAF and IQSVIDFVIVAFAIFMGVKAI.

The protein belongs to the MscL family. Homopentamer.

Its subcellular location is the cell inner membrane. In terms of biological role, channel that opens in response to stretch forces in the membrane lipid bilayer. May participate in the regulation of osmotic pressure changes within the cell. This chain is Large-conductance mechanosensitive channel, found in Pseudomonas fluorescens (strain SBW25).